Consider the following 374-residue polypeptide: GDSL esterase/lipase 1 (374 aa).

A signal peptide spans 1–25; the sequence is MENSQLVSITFLAYTIIISIGSINC. N-linked (GlcNAc...) asparagine glycosylation is present at Asn34. Ser44 functions as the Nucleophile in the catalytic mechanism. Residues Asn184, Asn203, and Asn330 are each glycosylated (N-linked (GlcNAc...) asparagine). Catalysis depends on charge relay system residues Asp338 and His341. An N-linked (GlcNAc...) asparagine glycan is attached at Asn360.

It belongs to the 'GDSL' lipolytic enzyme family.

It localises to the secreted. Functionally, confers resistance to the necrotrophic fungus Alternaria brassicicola. Possesses lipase and antimicrobial activities that directly disrupt fungal spore integrity. Triggers systemic resistance, mostly by the ethylene-dependent pathway. This is GDSL esterase/lipase 1 from Arabidopsis thaliana (Mouse-ear cress).